The primary structure comprises 281 residues: MKIIRARTAGFCMGVSLALRKLDREVTENNAPIATLGPIIHNPQVMAHYEERGVRCLRDTAQVVPGQRVVIRAHGIPVAEETALKATGASVVDATCPKVKRAQLGIAEERGRGGTLLLFGEADHPEVRGLLSYAGEGAMVFGSLDELKGLPLRDDVAYFLAAQTTQDRAGFEDVVSWLRQRLGHDIPVLQTICDATRKRQQEAVDIARRVQAMVVVGGFDSGNTRRLADVARAQGVFTVHVETVDQLPVDELRKKSVIGLTAGASTPKSLIDAVQRFLESL.

Position 12 (Cys-12) interacts with [4Fe-4S] cluster. 2 residues coordinate (2E)-4-hydroxy-3-methylbut-2-enyl diphosphate: His-41 and His-74. His-41 and His-74 together coordinate dimethylallyl diphosphate. Isopentenyl diphosphate is bound by residues His-41 and His-74. A [4Fe-4S] cluster-binding site is contributed by Cys-96. Position 124 (His-124) interacts with (2E)-4-hydroxy-3-methylbut-2-enyl diphosphate. His-124 contributes to the dimethylallyl diphosphate binding site. His-124 is an isopentenyl diphosphate binding site. Residue Glu-126 is the Proton donor of the active site. Thr-164 is a (2E)-4-hydroxy-3-methylbut-2-enyl diphosphate binding site. Cys-193 is a binding site for [4Fe-4S] cluster. (2E)-4-hydroxy-3-methylbut-2-enyl diphosphate is bound by residues Ser-221, Asn-223, and Ser-265. Dimethylallyl diphosphate contacts are provided by Ser-221, Asn-223, and Ser-265. Isopentenyl diphosphate-binding residues include Ser-221, Asn-223, and Ser-265.

Belongs to the IspH family. Requires [4Fe-4S] cluster as cofactor.

The catalysed reaction is isopentenyl diphosphate + 2 oxidized [2Fe-2S]-[ferredoxin] + H2O = (2E)-4-hydroxy-3-methylbut-2-enyl diphosphate + 2 reduced [2Fe-2S]-[ferredoxin] + 2 H(+). The enzyme catalyses dimethylallyl diphosphate + 2 oxidized [2Fe-2S]-[ferredoxin] + H2O = (2E)-4-hydroxy-3-methylbut-2-enyl diphosphate + 2 reduced [2Fe-2S]-[ferredoxin] + 2 H(+). Its pathway is isoprenoid biosynthesis; dimethylallyl diphosphate biosynthesis; dimethylallyl diphosphate from (2E)-4-hydroxy-3-methylbutenyl diphosphate: step 1/1. It participates in isoprenoid biosynthesis; isopentenyl diphosphate biosynthesis via DXP pathway; isopentenyl diphosphate from 1-deoxy-D-xylulose 5-phosphate: step 6/6. Its function is as follows. Catalyzes the conversion of 1-hydroxy-2-methyl-2-(E)-butenyl 4-diphosphate (HMBPP) into a mixture of isopentenyl diphosphate (IPP) and dimethylallyl diphosphate (DMAPP). Acts in the terminal step of the DOXP/MEP pathway for isoprenoid precursor biosynthesis. The protein is 4-hydroxy-3-methylbut-2-enyl diphosphate reductase of Nitratidesulfovibrio vulgaris (strain DSM 19637 / Miyazaki F) (Desulfovibrio vulgaris).